We begin with the raw amino-acid sequence, 858 residues long: MTGRARARSRGRGRGQEPAAPGAQPPVSQEAAKPVVSTPSEGQLVGRGRQKPAPGAMSEEAMLQISAGFQQVKIGERGGRRRDFHDSGVHTRQLMEHVKESKTGVSGTAIELRANFMRLLSRPMWALYQYHVDYKPPMESRRLRSALLFQHEETLGKAHTFDGAILFLPNKLRNAETVLCSETRNGEKVEITVTLTNELPPSSPVCLQFYNILFRRILRILNMQQIGRHYYNPDDPFNIPQHRLTIWPGFMTTILQYESSIMLCSDVSHKVLRSETVLDFMYSLRQQCGDQRFPEACTKELVGLIILTKYNNKTYRIDDIAWDHTPNNTFKKGDTEISFKNYFKSQYGLDITDGNQVLLVSHVKRLGPSGRPPPGPAMLVPEFCYLTGLTDKMRADFNIMKDLASHTRLSPEQREGRINRLISNINRNGDVQNELTTWGLSFENKLLSLNGRVLPSERIIQGGRAFEYNPWTADWSKEMRGLPLISCMSLDNWLMFYTRRNADVAQSLLQTLNKVSGPMGIRMQRAVMIEYEDRQESLLRALQQNVARETQMVVVILPTNRKDKYDCVKKYLCVDCPTPSQCVVSRTISKPQALMTVATKIALQMNCKMGGELWSVEIPLRQLMIVGIDCYHDTAAGKRSIGAMVASLNQGMSRWFSKCVLQNRGQEIIDALKGSLQGALKAYLKYNNSLPSRIIVYRDGVGDGMLQSVVDYEVPQIMQSIKTMGQDYEPKLSVVVVKKRISSRFFARIDGKIANPPPGTVIDTEVTRPEWYDFFIVSQAVRFGCVAPTHYNVVFDNSGLKPDHMQRLTYKLCHMYYNWQGIVRVPAPCQYAHKLAFLVGQSIHKEPNMNLDDFLYYL.

The span at 1–13 (MTGRARARSRGRG) shows a compositional bias: basic residues. Residues 1 to 56 (MTGRARARSRGRGRGQEPAAPGAQPPVSQEAAKPVVSTPSEGQLVGRGRQKPAPGA) are disordered. The span at 16–26 (QEPAAPGAQPP) shows a compositional bias: low complexity. The PAZ domain maps to 276-388 (TVLDFMYSLR…LVPEFCYLTG (113 aa)). Residues 314–316 (TYR) form a required for binding 2'-O-methylated 3'-end of piRNAs region. The segment at 476 to 612 (SKEMRGLPLI…LQMNCKMGGE (137 aa)) is MID region. The region spanning 552–844 (MVVVILPTNR…LAFLVGQSIH (293 aa)) is the Piwi domain. Residues aspartate 629, glutamate 667, aspartate 699, and histidine 833 contribute to the active site.

Belongs to the argonaute family. Piwi subfamily. Mg(2+) serves as cofactor. Post-translationally, methylated on arginine residues; required for the interaction with Tudor domain-containing protein and subsequent localization to the meiotic nuage, also named P granule. In terms of tissue distribution, expressed exclusively in the adult gonads; expression in the ovary weaker than in the testis (at protein level). During neurogenesis and organogenesis, expression is detected in CNS (midbrain and eye) and fin buds. Starting from 24 hours post-fertilization, expression is found in the genital ridge.

The protein localises to the cytoplasm. Its function is as follows. Plays a central role during gametogenesis by repressing transposable elements and preventing their mobilization, which is essential for the germline integrity. Acts via the piRNA metabolic process, which mediates the repression of transposable elements during meiosis by forming complexes composed of piRNAs and Piwi proteins and governs the methylation and subsequent repression of transposons. Directly binds methylated piRNAs, a class of 24 to 30 nucleotide RNAs that are generated by a Dicer-independent mechanism and are primarily derived from transposons and other repeated sequence elements. Has a strong preference for piRNAs with a uridine nucleotide at their 5'-end (g1U preference, also named 1U-bias) and binds piRNAs in an opposite direction compared to piwil2/zili. Participates in a piRNA amplification loop with piwil2/zili. Not involved in the piRNA amplification loop, also named ping-pong amplification cycle. Acts as an endoribonuclease that cleaves transposon messenger RNAs. The protein is Piwi-like protein 1 (piwil1) of Danio rerio (Zebrafish).